A 304-amino-acid chain; its full sequence is Acetaldehyde dehydrogenase (304 aa).

The active-site Acyl-thioester intermediate is the Cys-131. Residues 162-170 (SAGPGTRKN) and Asn-273 each bind NAD(+).

The protein belongs to the acetaldehyde dehydrogenase family.

The catalysed reaction is acetaldehyde + NAD(+) + CoA = acetyl-CoA + NADH + H(+). This chain is Acetaldehyde dehydrogenase, found in Polaromonas naphthalenivorans (strain CJ2).